A 420-amino-acid chain; its full sequence is Tyrosine--tRNA ligase (420 aa).

Tyr-33 provides a ligand contact to L-tyrosine. The 'HIGH' region motif lies at 38–47 (PTADSLHIGH). L-tyrosine is bound by residues Tyr-168 and Gln-172. The 'KMSKS' region signature appears at 231-235 (KFGKT). ATP is bound at residue Lys-234. The 67-residue stretch at 353 to 419 (MLLVDALIKV…GKKNYYLVKL (67 aa)) folds into the S4 RNA-binding domain.

This sequence belongs to the class-I aminoacyl-tRNA synthetase family. TyrS type 1 subfamily. Homodimer.

Its subcellular location is the cytoplasm. The enzyme catalyses tRNA(Tyr) + L-tyrosine + ATP = L-tyrosyl-tRNA(Tyr) + AMP + diphosphate + H(+). In terms of biological role, catalyzes the attachment of tyrosine to tRNA(Tyr) in a two-step reaction: tyrosine is first activated by ATP to form Tyr-AMP and then transferred to the acceptor end of tRNA(Tyr). The polypeptide is Tyrosine--tRNA ligase (Desulfitobacterium hafniense (strain Y51)).